A 316-amino-acid polypeptide reads, in one-letter code: Transaldolase (316 aa).

Lys132 functions as the Schiff-base intermediate with substrate in the catalytic mechanism.

Belongs to the transaldolase family. Type 1 subfamily. As to quaternary structure, homodimer.

The protein resides in the cytoplasm. It catalyses the reaction D-sedoheptulose 7-phosphate + D-glyceraldehyde 3-phosphate = D-erythrose 4-phosphate + beta-D-fructose 6-phosphate. It participates in carbohydrate degradation; pentose phosphate pathway; D-glyceraldehyde 3-phosphate and beta-D-fructose 6-phosphate from D-ribose 5-phosphate and D-xylulose 5-phosphate (non-oxidative stage): step 2/3. Its function is as follows. Transaldolase is important for the balance of metabolites in the pentose-phosphate pathway. The protein is Transaldolase of Marinomonas sp. (strain MWYL1).